Reading from the N-terminus, the 286-residue chain is Release factor glutamine methyltransferase (286 aa).

S-adenosyl-L-methionine is bound by residues 121-125 (GTGTG), D144, W172, and N188. 188-191 (NPPY) provides a ligand contact to substrate.

This sequence belongs to the protein N5-glutamine methyltransferase family. PrmC subfamily.

The catalysed reaction is L-glutaminyl-[peptide chain release factor] + S-adenosyl-L-methionine = N(5)-methyl-L-glutaminyl-[peptide chain release factor] + S-adenosyl-L-homocysteine + H(+). Methylates the class 1 translation termination release factors RF1/PrfA and RF2/PrfB on the glutamine residue of the universally conserved GGQ motif. In Vibrio cholerae serotype O1 (strain ATCC 39315 / El Tor Inaba N16961), this protein is Release factor glutamine methyltransferase.